Consider the following 644-residue polypeptide: MSFSVTLPDGSKKEFDKAVSVKEVASSIATSLGKAAVGAKVNGQVKPLDYEIDSDVEIAIITDKDEEGLDILRATAAFAFEAVAKKKYPELRLGQHVADEGGFYVDTDKKDQIKVTELPELEKAMEKLIKSGQPIEHVVMDKSELEEMFKDDPFKSDLLKKIDSDKVDAYKLGDFVDFGFDALLPNTGKIKHFKLLSVAGAYWLGKSSNPMLQRIFGTAFFKEAALKEDLKRRAEIKERDHRTIGRDLDLFFVDPKVGAGLPYWMPKGATIRRVVERYIIDREVADGYKHVYTPVLMNLDAYKTSGHWAHYRDDMFPPMDMGDGEMLELRPMNCPSHIQIYKHHIRSYRDLPLRVAELGMMHRYEKSGALSGLQRVREMTLNDGHTFVELDQVQSEFAKILKLIMDVYRDFDITDYYFRLSYRDPKNTDKYFANDEMWERSQKMLKGAMDDLGLDYVEAEGEAAFYGPKLDIQTKTALGNDETMSTIQLDFMLPERFGLTYVGKDGEEHRPVMVHRGIVGTMERFIAYLTEIYKGAFPTWLAPVQAEIIPVNNEAHGEYAEKVRQELAKRGFRVEVDDRNEKMGYKIRESQTQKVPYTLVLGDEEMKNGSVNVRRYGTDEEISKSLDDFINEIDADVKSYSREN.

In terms of domain architecture, TGS spans 1–62; sequence MSFSVTLPDG…DSDVEIAIIT (62 aa). The segment at 240–538 is catalytic; it reads DHRTIGRDLD…LTEIYKGAFP (299 aa). Residues C334, H385, and H515 each contribute to the Zn(2+) site.

The protein belongs to the class-II aminoacyl-tRNA synthetase family. Homodimer. The cofactor is Zn(2+).

The protein resides in the cytoplasm. The catalysed reaction is tRNA(Thr) + L-threonine + ATP = L-threonyl-tRNA(Thr) + AMP + diphosphate + H(+). Catalyzes the attachment of threonine to tRNA(Thr) in a two-step reaction: L-threonine is first activated by ATP to form Thr-AMP and then transferred to the acceptor end of tRNA(Thr). Also edits incorrectly charged L-seryl-tRNA(Thr). The polypeptide is Threonine--tRNA ligase (Lactobacillus acidophilus (strain ATCC 700396 / NCK56 / N2 / NCFM)).